We begin with the raw amino-acid sequence, 477 residues long: Sporulation-specific protein 77 (477 aa).

The tract at residues 428–452 (SQQRESSNAESESITSSTEEDEEGL) is disordered. Low complexity predominate over residues 432–444 (ESSNAESESITSS).

Its subcellular location is the cytoplasm. In terms of biological role, required for spore wall assembly and ascus formation. The polypeptide is Sporulation-specific protein 77 (SPO77) (Saccharomyces cerevisiae (strain ATCC 204508 / S288c) (Baker's yeast)).